Consider the following 641-residue polypeptide: Fructose-1,6-bisphosphatase class 3 (641 aa).

This sequence belongs to the FBPase class 3 family. Mn(2+) serves as cofactor.

The enzyme catalyses beta-D-fructose 1,6-bisphosphate + H2O = beta-D-fructose 6-phosphate + phosphate. The protein operates within carbohydrate biosynthesis; gluconeogenesis. In Ligilactobacillus salivarius (strain UCC118) (Lactobacillus salivarius), this protein is Fructose-1,6-bisphosphatase class 3.